Reading from the N-terminus, the 453-residue chain is Dibenzothiophene-sulfone monooxygenase (453 aa).

Residues Asp59, Thr106, His156, Tyr160, and Ser231 each contribute to the FMN site.

This sequence belongs to the NtaA/SnaA/DszA monooxygenase family. In terms of assembly, homodimer.

It localises to the cytoplasm. It catalyses the reaction dibenzothiophene 5,5-dioxide + FMNH2 + NADH + O2 = 2'-hydroxybiphenyl-2-sulfinate + FMN + NAD(+) + H2O + H(+). It participates in sulfur metabolism; dibenzothiophene degradation. Functionally, catalyzes the second step of the '4S' desulfurization pathway that removes covalently bound sulfur from dibenzothiophene (DBT) without breaking carbon-carbon bonds. Metabolizes DBT-sulfone (DBTO2 or DBT 5,5-dioxide) to 2-(2'-hydroxyphenyl)benzene sulphinate (HBPS). This Rhodococcus erythropolis (strain XP) protein is Dibenzothiophene-sulfone monooxygenase.